The following is a 304-amino-acid chain: L-threonate dehydrogenase (304 aa).

NAD(+) contacts are provided by residues 7-35 (YAVA…TYGV) and threonine 102. The active site involves lysine 178. Position 246 (lysine 246) interacts with NAD(+).

Belongs to the HIBADH-related family. L-threonate dehydrogenase subfamily.

The enzyme catalyses L-threonate + NAD(+) = 2-dehydro-L-erythronate + NADH + H(+). Its function is as follows. Catalyzes oxidation of L-threonate to 2-oxo-tetronate. Can use either NAD(+) or NADP(+) as cosubstrate, with a preference for NAD(+). This Pectobacterium atrosepticum (strain SCRI 1043 / ATCC BAA-672) (Erwinia carotovora subsp. atroseptica) protein is L-threonate dehydrogenase.